The primary structure comprises 349 residues: Isopentenyl-diphosphate delta-isomerase (349 aa).

6-7 (RK) contributes to the substrate binding site. FMN-binding positions include 62–64 (AMT), Ser-93, and Asn-122. Gln-152 contributes to the substrate binding site. Glu-153 contributes to the Mg(2+) binding site. Residues Lys-184, Thr-214, 258–259 (GG), and 280–281 (AG) each bind FMN.

Belongs to the IPP isomerase type 2 family. Homooctamer. Dimer of tetramers. FMN serves as cofactor. NADPH is required as a cofactor. It depends on Mg(2+) as a cofactor.

It localises to the cytoplasm. The enzyme catalyses isopentenyl diphosphate = dimethylallyl diphosphate. Functionally, involved in the biosynthesis of isoprenoids. Catalyzes the 1,3-allylic rearrangement of the homoallylic substrate isopentenyl (IPP) to its allylic isomer, dimethylallyl diphosphate (DMAPP). The protein is Isopentenyl-diphosphate delta-isomerase of Bacillus subtilis (strain 168).